The sequence spans 240 residues: Ribonuclease PH (240 aa).

Phosphate is bound by residues Arg87 and 125–127 (GTR).

Belongs to the RNase PH family. Homohexameric ring arranged as a trimer of dimers.

The catalysed reaction is tRNA(n+1) + phosphate = tRNA(n) + a ribonucleoside 5'-diphosphate. Functionally, phosphorolytic 3'-5' exoribonuclease that plays an important role in tRNA 3'-end maturation. Removes nucleotide residues following the 3'-CCA terminus of tRNAs; can also add nucleotides to the ends of RNA molecules by using nucleoside diphosphates as substrates, but this may not be physiologically important. Probably plays a role in initiation of 16S rRNA degradation (leading to ribosome degradation) during starvation. The chain is Ribonuclease PH from Pseudomonas fluorescens (strain Pf0-1).